Reading from the N-terminus, the 215-residue chain is Probable cutinase 3 (215 aa).

The N-terminal stretch at 1–17 (MHFRALLVSALATLAMA) is a signal peptide. 2 disulfide bridges follow: cysteine 39/cysteine 118 and cysteine 65/cysteine 79. Serine 129 functions as the Nucleophile in the catalytic mechanism. Cysteine 180 and cysteine 187 are disulfide-bonded. Residue aspartate 184 is part of the active site. Histidine 197 acts as the Proton donor/acceptor in catalysis.

This sequence belongs to the cutinase family.

The protein resides in the secreted. It carries out the reaction cutin + H2O = cutin monomers.. In terms of biological role, catalyzes the hydrolysis of complex carboxylic polyesters found in the cell wall of plants. Degrades cutin, a macromolecule that forms the structure of the plant cuticle. This Aspergillus clavatus (strain ATCC 1007 / CBS 513.65 / DSM 816 / NCTC 3887 / NRRL 1 / QM 1276 / 107) protein is Probable cutinase 3.